The following is a 240-amino-acid chain: Sugar fermentation stimulation protein homolog (240 aa).

The protein belongs to the SfsA family.

The protein is Sugar fermentation stimulation protein homolog of Pasteurella multocida (strain Pm70).